The following is a 301-amino-acid chain: NADH-cytochrome b5 reductase 3 (301 aa).

A lipid anchor (N-myristoyl glycine) is attached at glycine 2. In terms of domain architecture, FAD-binding FR-type spans 40–152; sequence DIKYPLRLID…RGPSGLLVYQ (113 aa). Lysine 42 carries the post-translational modification N6-acetyllysine. The residue at position 43 (tyrosine 43) is a Phosphotyrosine. Residues arginine 92, proline 93, tyrosine 94, valine 109, lysine 111, and phenylalanine 114 each coordinate FAD. Lysine 120 is subject to N6-acetyllysine. FAD is bound by residues lysine 126, methionine 127, serine 128, and threonine 185.

It belongs to the flavoprotein pyridine nucleotide cytochrome reductase family. As to quaternary structure, component of a complex composed of cytochrome b5, NADH-cytochrome b5 reductase (CYB5R3) and MTARC2. Interacts with MTLN; the interaction is required to maintain cellular lipid composition and leads to stimulation of mitochondrial respiratory complex I activity. The cofactor is FAD. As to expression, expressed at late stages of erythroid maturation.

It is found in the endoplasmic reticulum membrane. The protein localises to the mitochondrion outer membrane. Its subcellular location is the cytoplasm. The enzyme catalyses 2 Fe(III)-[cytochrome b5] + NADH = 2 Fe(II)-[cytochrome b5] + NAD(+) + H(+). Catalyzes the reduction of two molecules of cytochrome b5 using NADH as the electron donor. The protein is NADH-cytochrome b5 reductase 3 of Homo sapiens (Human).